The sequence spans 67 residues: Large ribosomal subunit protein bL35 (67 aa).

It belongs to the bacterial ribosomal protein bL35 family.

The sequence is that of Large ribosomal subunit protein bL35 from Leptothrix cholodnii (strain ATCC 51168 / LMG 8142 / SP-6) (Leptothrix discophora (strain SP-6)).